Reading from the N-terminus, the 761-residue chain is Dipeptidyl-peptidase 4 (761 aa).

The signal sequence occupies residues 1–15 (MTLSAWIILVTLAMA). Catalysis depends on charge relay system residues Ser622, Asp706, and His738.

It belongs to the peptidase S9C family.

It is found in the membrane. In terms of biological role, may be involved in metabolism of dipeptides or may affect host defense mechanisms. The polypeptide is Dipeptidyl-peptidase 4 (DPP) (Giardia intestinalis (Giardia lamblia)).